We begin with the raw amino-acid sequence, 253 residues long: UDP-Glc:alpha-D-GlcNAc-diphosphoundecaprenol beta-1,3-glucosyltransferase WfgD (253 aa).

The protein belongs to the glycosyltransferase 2 family. The cofactor is Mn(2+). Requires Mg(2+) as cofactor.

It is found in the cell inner membrane. It catalyses the reaction N-acetyl-alpha-D-glucosaminyl-di-trans,octa-cis-undecaprenyl diphosphate + UDP-alpha-D-glucose = beta-D-Glc-(1-&gt;3)-alpha-D-GlcNAc-di-trans,octa-cis-undecaprenyl diphosphate + UDP + H(+). The protein operates within bacterial outer membrane biogenesis; lipopolysaccharide biosynthesis. Its function is as follows. Catalyzes the addition of Glc, the second sugar moiety of the O152-antigen repeating unit, to GlcNAc-pyrophosphate-undecaprenol. The sequence is that of UDP-Glc:alpha-D-GlcNAc-diphosphoundecaprenol beta-1,3-glucosyltransferase WfgD (wfgD) from Escherichia coli.